The chain runs to 317 residues: Transaldolase (317 aa).

Lysine 126 acts as the Schiff-base intermediate with substrate in catalysis.

The protein belongs to the transaldolase family. Type 1 subfamily. Homodimer.

The protein localises to the cytoplasm. It carries out the reaction D-sedoheptulose 7-phosphate + D-glyceraldehyde 3-phosphate = D-erythrose 4-phosphate + beta-D-fructose 6-phosphate. The protein operates within carbohydrate degradation; pentose phosphate pathway; D-glyceraldehyde 3-phosphate and beta-D-fructose 6-phosphate from D-ribose 5-phosphate and D-xylulose 5-phosphate (non-oxidative stage): step 2/3. Functionally, transaldolase is important for the balance of metabolites in the pentose-phosphate pathway. The protein is Transaldolase of Burkholderia orbicola (strain MC0-3).